An 822-amino-acid chain; its full sequence is Nucleolar complex protein 3 (822 aa).

3 disordered regions span residues 1-86 (MGTK…DGDD), 106-142 (ANKR…KEQD), and 172-199 (KPKQ…EDSD). The span at 13-23 (RAAHLKSKKTP) shows a compositional bias: basic residues. A compositionally biased stretch (basic and acidic residues) spans 35–45 (KRDQLKSKREQ). The Nuclear localization signal signature appears at 41–48 (SKREQGQN). The span at 76–86 (PLEEDNEDGDD) shows a compositional bias: acidic residues. A compositionally biased stretch (polar residues) spans 116–126 (TGENDPDQGQS). The segment covering 181–199 (EEEEDDSEEDGDTEYEDSD) has biased composition (acidic residues). Ser187 is modified (phosphoserine). Position 193 is a phosphothreonine (Thr193). Ser198 is modified (phosphoserine). A coiled-coil region spans residues 445 to 509 (KIKNVNLDAE…NKQAKHQKLT (65 aa)).

The protein belongs to the CBF/MAK21 family.

Its subcellular location is the nucleus. The protein resides in the nucleolus. This chain is Nucleolar complex protein 3, found in Drosophila melanogaster (Fruit fly).